A 538-amino-acid chain; its full sequence is Capsular polysaccharide biosynthesis protein RkpI (538 aa).

Transmembrane regions (helical) follow at residues 16-36 (LHDYPIALTLGCYLLSCAVIF), 70-90 (VIALVFAGFFAISWRPLYAAA), 114-134 (LVFSDIALVADVFKYKTIFYA), 139-159 (IVFWIVAFLYVFGVSALYMYF), 170-190 (LFWVLVMVGIAAGPWGLLFYG), and 212-232 (NTVRFGTFASVVFHFIIWLGV).

The protein localises to the cell membrane. It participates in capsule biogenesis; capsule polysaccharide biosynthesis. Functionally, involved in antigen K (capsular polysaccharide) biosynthesis. The protein is Capsular polysaccharide biosynthesis protein RkpI (rkpI) of Rhizobium meliloti (strain 1021) (Ensifer meliloti).